The primary structure comprises 446 residues: Probable E3 ubiquitin-protein ligase XBOS31 (446 aa).

ANK repeat units follow at residues Asp-46–Val-75, Lys-79–Thr-108, Arg-113–Gly-142, Arg-160–Ala-189, and Pro-197–Arg-227. The RING-type zinc finger occupies Cys-317–Arg-366. The tract at residues Thr-376–Ser-401 is disordered.

It catalyses the reaction S-ubiquitinyl-[E2 ubiquitin-conjugating enzyme]-L-cysteine + [acceptor protein]-L-lysine = [E2 ubiquitin-conjugating enzyme]-L-cysteine + N(6)-ubiquitinyl-[acceptor protein]-L-lysine.. It participates in protein modification; protein ubiquitination. This is Probable E3 ubiquitin-protein ligase XBOS31 (XBOS31) from Oryza sativa subsp. japonica (Rice).